Here is a 129-residue protein sequence, read N- to C-terminus: Glycine cleavage system H protein (129 aa).

Positions 24-106 (TYTVGITEHA…YADGWIFKIK (83 aa)) constitute a Lipoyl-binding domain. Position 65 is an N6-lipoyllysine (Lys-65).

It belongs to the GcvH family. The glycine cleavage system is composed of four proteins: P, T, L and H. It depends on (R)-lipoate as a cofactor.

In terms of biological role, the glycine cleavage system catalyzes the degradation of glycine. The H protein shuttles the methylamine group of glycine from the P protein to the T protein. This Salmonella arizonae (strain ATCC BAA-731 / CDC346-86 / RSK2980) protein is Glycine cleavage system H protein.